The chain runs to 855 residues: DNA mismatch repair protein MutS (855 aa).

616–623 (GPNMGGKS) serves as a coordination point for ATP.

Belongs to the DNA mismatch repair MutS family.

In terms of biological role, this protein is involved in the repair of mismatches in DNA. It is possible that it carries out the mismatch recognition step. This protein has a weak ATPase activity. This Salmonella dublin (strain CT_02021853) protein is DNA mismatch repair protein MutS.